The following is a 74-amino-acid chain: Ferredoxin-like protein in nif region (74 aa).

The region spanning 2–30 is the 4Fe-4S ferredoxin-type domain; it reads PFKIIASQCTSCSACEPLCPNVAISEKGG. Residues Cys-10, Cys-13, Cys-16, Cys-20, Cys-39, Cys-51, and Cys-55 each contribute to the [4Fe-4S] cluster site.

It depends on [4Fe-4S] cluster as a cofactor.

The protein is Ferredoxin-like protein in nif region (frxA) of Bradyrhizobium diazoefficiens (strain JCM 10833 / BCRC 13528 / IAM 13628 / NBRC 14792 / USDA 110).